Consider the following 190-residue polypeptide: Probable nicotinate-nucleotide adenylyltransferase (190 aa).

Belongs to the NadD family.

It catalyses the reaction nicotinate beta-D-ribonucleotide + ATP + H(+) = deamido-NAD(+) + diphosphate. Its pathway is cofactor biosynthesis; NAD(+) biosynthesis; deamido-NAD(+) from nicotinate D-ribonucleotide: step 1/1. Functionally, catalyzes the reversible adenylation of nicotinate mononucleotide (NaMN) to nicotinic acid adenine dinucleotide (NaAD). This chain is Probable nicotinate-nucleotide adenylyltransferase, found in Frankia casuarinae (strain DSM 45818 / CECT 9043 / HFP020203 / CcI3).